Reading from the N-terminus, the 311-residue chain is Malate dehydrogenase (311 aa).

NAD(+)-binding positions include 7-13 (GAAGGIG) and Asp-34. Residues Arg-81 and Arg-87 each contribute to the substrate site. Residues Asn-94 and 117–119 (ITN) contribute to the NAD(+) site. Positions 119 and 153 each coordinate substrate. His-177 acts as the Proton acceptor in catalysis. Residue Met-227 participates in NAD(+) binding.

The protein belongs to the LDH/MDH superfamily. MDH type 1 family. As to quaternary structure, homodimer.

The catalysed reaction is (S)-malate + NAD(+) = oxaloacetate + NADH + H(+). Its function is as follows. Catalyzes the reversible oxidation of malate to oxaloacetate. In Shewanella sp. (strain ANA-3), this protein is Malate dehydrogenase.